A 728-amino-acid polypeptide reads, in one-letter code: Elongation factor 2 (728 aa).

The region spanning 19–261 is the tr-type G domain; the sequence is EQIRNIAIAA…MVAEHFPNPI (243 aa). GTP contacts are provided by residues 28-35, 94-98, and 148-151; these read AHVDHGKT, DTPGH, and NKVD. A Diphthamide modification is found at His-596.

Belongs to the TRAFAC class translation factor GTPase superfamily. Classic translation factor GTPase family. EF-G/EF-2 subfamily.

Its subcellular location is the cytoplasm. Catalyzes the GTP-dependent ribosomal translocation step during translation elongation. During this step, the ribosome changes from the pre-translocational (PRE) to the post-translocational (POST) state as the newly formed A-site-bound peptidyl-tRNA and P-site-bound deacylated tRNA move to the P and E sites, respectively. Catalyzes the coordinated movement of the two tRNA molecules, the mRNA and conformational changes in the ribosome. This is Elongation factor 2 from Halobacterium salinarum (strain ATCC 29341 / DSM 671 / R1).